The following is a 1306-amino-acid chain: Putative late blight resistance protein homolog R1A-10 (1306 aa).

Coiled coils occupy residues 407-428 (SDSL…ESLQ) and 520-542 (PRMK…KLLS). In terms of domain architecture, NB-ARC spans 521–808 (RMKEEIVGFE…SEAFIKSSEG (288 aa)). 554-561 (GMPGLGKT) contacts ATP. 11 LRR repeats span residues 858–881 (AEEN…VYSH), 921–935 (LSSL…ILPN), 936–961 (FKFL…PYLR), 979–1007 (LWNL…VWDM), 1010–1035 (LRHL…NLDD), 1057–1081 (TPNL…ALNF), 1082–1106 (PIRL…ISAP), 1110–1129 (YLKL…TADH), 1130–1153 (LKNL…KVSN), 1156–1181 (FPQL…AFPN), and 1216–1240 (ESVV…NFKL). One can recognise an HMA domain in the interval 1240-1306 (LVLIEKWPKF…KLRKCGMPGL (67 aa)).

This sequence belongs to the disease resistance NB-LRR family.

It localises to the cytoplasm. It is found in the membrane. Its function is as follows. Confers resistance to late blight (Phytophthora infestans) races carrying the avirulence gene Avr1. Resistance proteins guard the plant against pathogens that contain an appropriate avirulence protein via an indirect interaction with this avirulence protein. That triggers a defense system including the hypersensitive response, which restricts the pathogen growth. The sequence is that of Putative late blight resistance protein homolog R1A-10 (R1A-10) from Solanum demissum (Wild potato).